A 278-amino-acid chain; its full sequence is Potassium/proton antiporter CemA (278 aa).

4 consecutive transmembrane segments (helical) span residues 61–81 (LIVLVVFPVVVHQVSKNFIIG), 155–175 (AIKNILADSISISVFILLIVL), 203–223 (IILFTDMFIGFHSPHGWEVVI), and 238–258 (FIFLFIATFPVSLDTVFKYWI).

This sequence belongs to the CemA family.

It localises to the plastid. Its subcellular location is the chloroplast inner membrane. It carries out the reaction K(+)(in) + H(+)(out) = K(+)(out) + H(+)(in). Functionally, contributes to K(+)/H(+) antiport activity by supporting proton efflux to control proton extrusion and homeostasis in chloroplasts in a light-dependent manner to modulate photosynthesis. Prevents excessive induction of non-photochemical quenching (NPQ) under continuous-light conditions. Indirectly promotes efficient inorganic carbon uptake into chloroplasts. The protein is Potassium/proton antiporter CemA of Cyanidium caldarium (Red alga).